The following is a 56-amino-acid chain: Small ribosomal subunit protein uS14 (56 aa).

Residues C21, C24, C39, and C42 each coordinate Zn(2+).

Belongs to the universal ribosomal protein uS14 family. Component of the 40S small ribosomal subunit. It depends on Zn(2+) as a cofactor.

It is found in the cytoplasm. The protein localises to the cytosol. Its subcellular location is the rough endoplasmic reticulum. The polypeptide is Small ribosomal subunit protein uS14 (RpS29) (Plutella xylostella (Diamondback moth)).